Reading from the N-terminus, the 434-residue chain is Adenylosuccinate synthetase (434 aa).

GTP-binding positions include 14–20 (GDEGKGK) and 42–44 (GHE). Aspartate 15 (proton acceptor) is an active-site residue. Positions 15 and 42 each coordinate Mg(2+). Residues 15–18 (DEGK), 40–43 (NSGH), threonine 133, arginine 147, asparagine 229, threonine 244, and arginine 308 contribute to the IMP site. The Proton donor role is filled by histidine 43. 304-310 (VTTGRVR) is a binding site for substrate. GTP contacts are provided by residues arginine 310, 336–338 (KLD), and 422–424 (GTG).

Belongs to the adenylosuccinate synthetase family. In terms of assembly, homodimer. Mg(2+) is required as a cofactor.

It is found in the cytoplasm. The catalysed reaction is IMP + L-aspartate + GTP = N(6)-(1,2-dicarboxyethyl)-AMP + GDP + phosphate + 2 H(+). Its pathway is purine metabolism; AMP biosynthesis via de novo pathway; AMP from IMP: step 1/2. In terms of biological role, plays an important role in the salvage pathway for purine nucleotide biosynthesis. Catalyzes the first committed step in the biosynthesis of AMP from IMP. The chain is Adenylosuccinate synthetase from Theileria parva (East coast fever infection agent).